The primary structure comprises 125 residues: MSGRGKGGKVKAKAKSRSSRAGLQFPVGRIHRLLRKGNYGERVGAGAPVYLAAVMEYLAAEVLELAGNAARDNKKTRIIPRHLQLAIRNDEELNKLLSGVTIAQGGVLPNIQAVLLPKKTESKKA.

Residues Met-1–Ser-18 are compositionally biased toward basic residues. Residues Met-1–Ala-21 form a disordered region. Ser-2 carries the N-acetylserine modification. Phosphoserine is present on Ser-2. A Glycyl lysine isopeptide (Lys-Gly) (interchain with G-Cter in ubiquitin) cross-link involves residue Lys-119.

The protein belongs to the histone H2A family. In terms of assembly, the nucleosome is a histone octamer containing two molecules each of H2A, H2B, H3 and H4 assembled in one H3-H4 heterotetramer and two H2A-H2B heterodimers. The octamer wraps approximately 147 bp of DNA. Post-translationally, monoubiquitination of Lys-119 gives a specific tag for epigenetic transcriptional repression. In terms of processing, phosphorylation on Ser-2 is enhanced during mitosis. Phosphorylation on Ser-2 directly represses transcription.

The protein resides in the nucleus. Its subcellular location is the chromosome. In terms of biological role, core component of nucleosome. Nucleosomes wrap and compact DNA into chromatin, limiting DNA accessibility to the cellular machineries which require DNA as a template. Histones thereby play a central role in transcription regulation, DNA repair, DNA replication and chromosomal stability. DNA accessibility is regulated via a complex set of post-translational modifications of histones, also called histone code, and nucleosome remodeling. The polypeptide is Histone H2A (Chironomus thummi thummi (Midge)).